The chain runs to 308 residues: Protease HtpX homolog (308 aa).

The next 2 helical transmembrane spans lie at 16 to 36 and 39 to 59; these read LLSL…IYAV and YLFG…VLMM. His-149 contacts Zn(2+). Glu-150 is an active-site residue. His-153 is a binding site for Zn(2+). The next 2 helical transmembrane spans lie at 161 to 181 and 192 to 212; these read VIMA…TTLF and IILA…VLSV. Position 217 (Glu-217) interacts with Zn(2+).

It belongs to the peptidase M48B family. Zn(2+) serves as cofactor.

It is found in the cell membrane. The sequence is that of Protease HtpX homolog from Thermoplasma volcanium (strain ATCC 51530 / DSM 4299 / JCM 9571 / NBRC 15438 / GSS1).